Here is a 259-residue protein sequence, read N- to C-terminus: Leucyl/phenylalanyl-tRNA--protein transferase (259 aa).

The protein belongs to the L/F-transferase family.

The protein resides in the cytoplasm. The enzyme catalyses N-terminal L-lysyl-[protein] + L-leucyl-tRNA(Leu) = N-terminal L-leucyl-L-lysyl-[protein] + tRNA(Leu) + H(+). It catalyses the reaction N-terminal L-arginyl-[protein] + L-leucyl-tRNA(Leu) = N-terminal L-leucyl-L-arginyl-[protein] + tRNA(Leu) + H(+). It carries out the reaction L-phenylalanyl-tRNA(Phe) + an N-terminal L-alpha-aminoacyl-[protein] = an N-terminal L-phenylalanyl-L-alpha-aminoacyl-[protein] + tRNA(Phe). In terms of biological role, functions in the N-end rule pathway of protein degradation where it conjugates Leu, Phe and, less efficiently, Met from aminoacyl-tRNAs to the N-termini of proteins containing an N-terminal arginine or lysine. This Teredinibacter turnerae (strain ATCC 39867 / T7901) protein is Leucyl/phenylalanyl-tRNA--protein transferase.